The sequence spans 481 residues: Argininosuccinate lyase (481 aa).

The protein belongs to the lyase 1 family. Argininosuccinate lyase subfamily.

The protein resides in the cytoplasm. The catalysed reaction is 2-(N(omega)-L-arginino)succinate = fumarate + L-arginine. It participates in amino-acid biosynthesis; L-arginine biosynthesis; L-arginine from L-ornithine and carbamoyl phosphate: step 3/3. The polypeptide is Argininosuccinate lyase (Methanococcus maripaludis (strain C6 / ATCC BAA-1332)).